Consider the following 362-residue polypeptide: 3-dehydroquinate synthase (362 aa).

Residues 71 to 76 (DGEQYK), 105 to 109 (GVVGD), 129 to 130 (TT), Lys-142, Lys-151, and 169 to 172 (CLKT) each bind NAD(+). Glu-184, His-247, and His-264 together coordinate Zn(2+).

This sequence belongs to the sugar phosphate cyclases superfamily. Dehydroquinate synthase family. Requires Co(2+) as cofactor. The cofactor is Zn(2+). It depends on NAD(+) as a cofactor.

Its subcellular location is the cytoplasm. The enzyme catalyses 7-phospho-2-dehydro-3-deoxy-D-arabino-heptonate = 3-dehydroquinate + phosphate. It participates in metabolic intermediate biosynthesis; chorismate biosynthesis; chorismate from D-erythrose 4-phosphate and phosphoenolpyruvate: step 2/7. Functionally, catalyzes the conversion of 3-deoxy-D-arabino-heptulosonate 7-phosphate (DAHP) to dehydroquinate (DHQ). This Escherichia coli O127:H6 (strain E2348/69 / EPEC) protein is 3-dehydroquinate synthase.